We begin with the raw amino-acid sequence, 176 residues long: Tubulin polymerization-promoting protein family member 3 (176 aa).

Alanine 2 is modified (N-acetylalanine). The disordered stretch occupies residues 132-152 (TGSHKERFDESGKGKGIAGRQ). Positions 134–144 (SHKERFDESGK) are enriched in basic and acidic residues.

Belongs to the TPPP family. In terms of tissue distribution, expressed in endometrium during the mid-secretory phase (LH + 7) (at protein level).

It localises to the cytoplasm. The protein localises to the cytoskeleton. In terms of biological role, regulator of microtubule dynamic that has microtubule bundling activity. Required for embryo implantation; possibly by regulating beta-catenin. Also required for decidualization via regulation of beta-catenin. The chain is Tubulin polymerization-promoting protein family member 3 from Homo sapiens (Human).